The primary structure comprises 122 residues: Large ribosomal subunit protein uL14c (122 aa).

The protein belongs to the universal ribosomal protein uL14 family. As to quaternary structure, part of the 50S ribosomal subunit.

It is found in the plastid. The protein resides in the chloroplast. Its function is as follows. Binds to 23S rRNA. This chain is Large ribosomal subunit protein uL14c, found in Chaetosphaeridium globosum (Charophycean green alga).